The sequence spans 953 residues: Calcium-transporting ATPase type 2C member 1 (953 aa).

At 1–104 (MDNLLPQSRF…NEFDISEDEP (104 aa)) the chain is on the cytoplasmic side. A helical transmembrane segment spans residues 105–125 (LWKKYISQFKNPLIMLLLASA). At 126–138 (VISVLMHQFDDAV) the chain is on the lumenal side. The helical transmembrane segment at 139–157 (SITVAILIVVTVAFVQEYR) threads the bilayer. At 158–296 (SEKSLEELSK…APKTPLQKSM (139 aa)) the chain is on the cytoplasmic side. The helical transmembrane segment at 297-316 (DLLGKQLSFYSFGIIGIIML) threads the bilayer. The Lumenal portion of the chain corresponds to 317-328 (VGWLLGKDILEM). The helical transmembrane segment at 329-346 (FTISVSLAVAAIPEGLPI) threads the bilayer. Positions 337, 338, 340, and 342 each coordinate Ca(2+). The Cytoplasmic segment spans residues 347 to 733 (VVTVTLALGV…EEGKGIYNNI (387 aa)). Asp-384 acts as the 4-aspartylphosphate intermediate in catalysis. Mg(2+) is bound by residues Asp-678 and Asp-682. A helical membrane pass occupies residues 734–753 (KNFVRFQLSTSIAALTLISL). At 754 to 763 (ATLMNFPNPL) the chain is on the lumenal side. Residues 764–784 (NAMQILWINIIMDGPPAQSLG) form a helical membrane-spanning segment. Ca(2+) contacts are provided by Asn-772 and Asp-776. Over 785–804 (VEPVDKDVIRKPPRNWKDSI) the chain is Cytoplasmic. The chain crosses the membrane as a helical span at residues 805 to 824 (LTKNLILKILVSSIIIVCGT). The Lumenal segment spans residues 825–842 (LFVFWRELRDNVITPRDT). A helical membrane pass occupies residues 843–862 (TMTFTCFVFFDMFNALSSRS). Topologically, residues 863-875 (QTKSVFEIGLCSN) are cytoplasmic. Residues 876–894 (KMFCYAVLGSIMGQLLVIY) traverse the membrane as a helical segment. Over 895-909 (FPPLQKVFQTESLSI) the chain is Lumenal. The chain crosses the membrane as a helical span at residues 910-930 (LDLLFLLGLTSSVCIVAEIIK). The Cytoplasmic portion of the chain corresponds to 931 to 953 (KVERSREKIQKPVSSTSSSFLEV).

Belongs to the cation transport ATPase (P-type) (TC 3.A.3) family. Type IIA subfamily. Monomer. Homodimer.

The protein resides in the golgi apparatus. The protein localises to the trans-Golgi network membrane. It is found in the golgi stack membrane. The catalysed reaction is Ca(2+)(in) + ATP + H2O = Ca(2+)(out) + ADP + phosphate + H(+). It catalyses the reaction Mn(2+)(in) + ATP + H2O = Mn(2+)(out) + ADP + phosphate + H(+). In terms of biological role, ATP-driven pump that supplies the Golgi apparatus with Ca(2+) and Mn(2+) ions, both essential cofactors for processing and trafficking of newly synthesized proteins in the secretory pathway. Within a catalytic cycle, acquires Ca(2+) or Mn(2+) ions on the cytoplasmic side of the membrane and delivers them to the lumenal side. The transfer of ions across the membrane is coupled to ATP hydrolysis and is associated with a transient phosphorylation that shifts the pump conformation from inward-facing to outward-facing state. Plays a primary role in the maintenance of Ca(2+) homeostasis in the trans-Golgi compartment with a functional impact on Golgi and post-Golgi protein sorting as well as a structural impact on cisternae morphology. Responsible for loading the Golgi stores with Ca(2+) ions in keratinocytes, contributing to keratinocyte differentiation and epidermis integrity. Participates in Ca(2+) and Mn(2+) ions uptake into the Golgi store of hippocampal neurons and regulates protein trafficking required for neural polarity. May also play a role in the maintenance of Ca(2+) and Mn(2+) homeostasis and signaling in the cytosol while preventing cytotoxicity. The polypeptide is Calcium-transporting ATPase type 2C member 1 (ATP2C1) (Bos taurus (Bovine)).